A 384-amino-acid chain; its full sequence is S-adenosylmethionine synthase (384 aa).

Histidine 15 is an ATP binding site. Aspartate 17 is a binding site for Mg(2+). Glutamate 43 serves as a coordination point for K(+). Glutamate 56 and glutamine 99 together coordinate L-methionine. A flexible loop region spans residues 99–109; sequence QSPDINQGVDR. Residues 164–166, 231–232, aspartate 240, 246–247, alanine 263, and lysine 267 contribute to the ATP site; these read DAK, RF, and RK. Aspartate 240 is an L-methionine binding site. Lysine 271 is an L-methionine binding site.

The protein belongs to the AdoMet synthase family. As to quaternary structure, homotetramer; dimer of dimers. It depends on Mg(2+) as a cofactor. The cofactor is K(+).

Its subcellular location is the cytoplasm. It carries out the reaction L-methionine + ATP + H2O = S-adenosyl-L-methionine + phosphate + diphosphate. Its pathway is amino-acid biosynthesis; S-adenosyl-L-methionine biosynthesis; S-adenosyl-L-methionine from L-methionine: step 1/1. Functionally, catalyzes the formation of S-adenosylmethionine (AdoMet) from methionine and ATP. The overall synthetic reaction is composed of two sequential steps, AdoMet formation and the subsequent tripolyphosphate hydrolysis which occurs prior to release of AdoMet from the enzyme. This chain is S-adenosylmethionine synthase, found in Shewanella woodyi (strain ATCC 51908 / MS32).